We begin with the raw amino-acid sequence, 249 residues long: Small ribosomal subunit protein uS3 (249 aa).

Residues 23–94 (LNEFFTRELS…TVELYAEKVQ (72 aa)) enclose the KH type-2 domain. Phosphoserine is present on residues Ser-32, Ser-37, Ser-106, and Ser-141.

It belongs to the universal ribosomal protein uS3 family. As to quaternary structure, component of the small ribosomal subunit (SSU). Mature yeast ribosomes consist of a small (40S) and a large (60S) subunit. The 40S small subunit contains 1 molecule of ribosomal RNA (18S rRNA) and at least 33 different proteins. The large 60S subunit contains 3 rRNA molecules (25S, 5.8S and 5S rRNA) and at least 46 different proteins.

The protein resides in the cytoplasm. Its function is as follows. Component of the ribosome, a large ribonucleoprotein complex responsible for the synthesis of proteins in the cell. The small ribosomal subunit (SSU) binds messenger RNAs (mRNAs) and translates the encoded message by selecting cognate aminoacyl-transfer RNA (tRNA) molecules. The large subunit (LSU) contains the ribosomal catalytic site termed the peptidyl transferase center (PTC), which catalyzes the formation of peptide bonds, thereby polymerizing the amino acids delivered by tRNAs into a polypeptide chain. The nascent polypeptides leave the ribosome through a tunnel in the LSU and interact with protein factors that function in enzymatic processing, targeting, and the membrane insertion of nascent chains at the exit of the ribosomal tunnel. This chain is Small ribosomal subunit protein uS3 (rps3), found in Schizosaccharomyces pombe (strain 972 / ATCC 24843) (Fission yeast).